We begin with the raw amino-acid sequence, 494 residues long: GTPase Der (494 aa).

EngA-type G domains follow at residues 3–166 (PVVA…VGEK) and 208–381 (IKLA…ECAT). GTP contacts are provided by residues 9 to 16 (GRPNVGKS), 56 to 60 (DTGGI), 118 to 121 (NKTD), 214 to 221 (GRPNVGKS), 261 to 265 (DTAGV), and 326 to 329 (NKWD). The region spanning 382-466 (RRVNTSMLTK…PIRIQFKEGE (85 aa)) is the KH-like domain.

The protein belongs to the TRAFAC class TrmE-Era-EngA-EngB-Septin-like GTPase superfamily. EngA (Der) GTPase family. Associates with the 50S ribosomal subunit.

Functionally, GTPase that plays an essential role in the late steps of ribosome biogenesis. This chain is GTPase Der, found in Serratia proteamaculans (strain 568).